A 384-amino-acid chain; its full sequence is Mannitol-1-phosphate 5-dehydrogenase (384 aa).

3–14 (ALHFGAGNIGRG) contributes to the NAD(+) binding site.

This sequence belongs to the mannitol dehydrogenase family.

It catalyses the reaction D-mannitol 1-phosphate + NAD(+) = beta-D-fructose 6-phosphate + NADH + H(+). The sequence is that of Mannitol-1-phosphate 5-dehydrogenase (mtlD) from Clostridium acetobutylicum (strain ATCC 824 / DSM 792 / JCM 1419 / IAM 19013 / LMG 5710 / NBRC 13948 / NRRL B-527 / VKM B-1787 / 2291 / W).